Consider the following 565-residue polypeptide: Phosphatidylinositol 4-kinase gamma 4 (565 aa).

2 consecutive Ubiquitin-like domains span residues 32-104 (IVIF…LVVR) and 109-187 (RAIS…RPAK). One can recognise a PI3K/PI4K catalytic domain in the interval 257 to 542 (GYLPVMSTEG…AILPGTSEET (286 aa)). The tract at residues 263–269 (STEGSGG) is G-loop. Residues 264–270 (TEGSGGV) and Lys286 each bind ATP. The segment at 291-311 (EPMAKNNPRGLPLSTDGEGLK) is disordered. 369 to 372 (QLFV) serves as a coordination point for ATP. The catalytic loop stretch occupies residues 402-410 (ANADRHAGN). Residues 425 to 451 (PIDHGYCLPEKFEDCTFEWLYWPQARE) form an activation loop region. Asp427 contributes to the ATP binding site.

This sequence belongs to the PI3/PI4-kinase family. Type II PI4K subfamily. As to quaternary structure, interacts with FTIP1 and RPN10. Specifically expressed in the phloem including companion cells.

Its subcellular location is the nucleus. The protein localises to the endoplasmic reticulum. The catalysed reaction is a 1,2-diacyl-sn-glycero-3-phospho-(1D-myo-inositol) + ATP = a 1,2-diacyl-sn-glycero-3-phospho-(1D-myo-inositol 4-phosphate) + ADP + H(+). In terms of biological role, the phosphorylation of phosphatidylinositol (PI) to PI4P is the first committed step in the generation of phosphatidylinositol 4,5-bisphosphate (PIP2), a precursor of the second messenger inositol 1,4,5-trisphosphate (InsP3). Involved in the control of flowering under long day conditions by promoting degradation of FTIP1. Recruits FTIP1 for degradation by the 26S proteasome in leaves, which affects RFT1 transport to the shoot apical meristem (SAM). In Oryza sativa subsp. japonica (Rice), this protein is Phosphatidylinositol 4-kinase gamma 4.